The sequence spans 398 residues: Protochlorophyllide reductase, chloroplastic (398 aa).

The N-terminal 64 residues, 1–64 (MALQAASLVS…NQQIGAIRAQ (64 aa)), are a transit peptide targeting the chloroplast.

Belongs to the short-chain dehydrogenases/reductases (SDR) family. POR subfamily.

The protein resides in the plastid. Its subcellular location is the chloroplast. The catalysed reaction is chlorophyllide a + NADP(+) = protochlorophyllide a + NADPH + H(+). It functions in the pathway porphyrin-containing compound metabolism; chlorophyll biosynthesis. In terms of biological role, phototransformation of protochlorophyllide (Pchlide) to chlorophyllide (Chlide). This is Protochlorophyllide reductase, chloroplastic (PORA) from Cucumis sativus (Cucumber).